A 122-amino-acid polypeptide reads, in one-letter code: Large ribosomal subunit protein uL14c (122 aa).

The protein belongs to the universal ribosomal protein uL14 family. Part of the 50S ribosomal subunit.

It localises to the plastid. Its subcellular location is the chloroplast. In terms of biological role, binds to 23S rRNA. The chain is Large ribosomal subunit protein uL14c from Oltmannsiellopsis viridis (Marine flagellate).